The chain runs to 2014 residues: Fatty acid synthase beta subunit pigK (2014 aa).

Residues 144 to 515 form an acetyltransferase (AT) domain region; that stretch reads LAAVFGGQST…KDGQGVRVII (372 aa). The For acetyltransferase activity role is filled by Ser-263. Residues 570-815 are enoyl reductase (ER) domain; the sequence is SRLLDTPPLM…LITEASGVSD (246 aa). Positions 1126-1606 are dehydratase (DH) domain; sequence RSGSPWIHAL…LPGDRLLVNV (481 aa). In terms of domain architecture, MaoC-like spans 1514 to 1627; the sequence is PGWPGVSSLE…FNVSAFKQAT (114 aa). The malonyl/palmitoyl transferase (MT/PT) domain stretch occupies residues 1645-2005; it reads FFFTGQGSQK…VREVFNITQS (361 aa). The For malonyltransferase activity role is filled by Ser-1790.

The protein belongs to the fungal fatty acid synthetase subunit beta family. [Alpha(6)beta(6)] hexamers of two multifunctional subunits (alpha and beta).

The enzyme catalyses acetyl-CoA + n malonyl-CoA + 2n NADPH + 4n H(+) = a long-chain-acyl-CoA + n CoA + n CO2 + 2n NADP(+).. It carries out the reaction holo-[ACP] + acetyl-CoA = acetyl-[ACP] + CoA. The catalysed reaction is holo-[ACP] + malonyl-CoA = malonyl-[ACP] + CoA. It catalyses the reaction a (3R)-hydroxyacyl-[ACP] = a (2E)-enoyl-[ACP] + H2O. The enzyme catalyses a 2,3-saturated acyl-[ACP] + NAD(+) = a (2E)-enoyl-[ACP] + NADH + H(+). It carries out the reaction (9Z)-octadecenoyl-[ACP] + H2O = (9Z)-octadecenoate + holo-[ACP] + H(+). It functions in the pathway secondary metabolite biosynthesis. In terms of biological role, fatty acid synthase subunit beta; part of the gene cluster that mediates the biosynthesis of azaphilone pigments (MonAzPs), a complex mixture of compounds with a common azaphilone skeleton very widely used as food colorants. PigJ and pigK form the two subunits of a dedicated fungal fatty acid synthase (FAS) that produces the side chain fatty acyl moiety of MonAzPs, a beta-keto fatty acid. The chain length control of the pigJ-pigK FAS is somewhat flexible as MonAzPs features either a beta-ketooctanoic or a beta-ketodecanoic acid moiety. The beta-ketoacyl-ACP probably serves as the substrate for the acetyltransferase pigD that directly transfers the fatty acyl chain to the C-4 alcohol of the pyran ring. The first step of the pathway is performed by the nrPKS pigA that forms the hexaketide precursor from successive condensations of five malonyl-CoA units, with a simple acetyl-CoA starter unit. The role of esterase pigG is not clear, but it may play at most a supplementary role in the formation of the benzaldehyde produced by the pigA nrPKS. This very reactive benzaldehyde is intercepted by the pigC ketoreductase that to provide the first stable enzyme-free MonAzPs intermediate, 6-(4-hydroxy-2-oxopentyl)-3-methyl-2,4-dioxocyclohexane carbaldehyde, also known as M7PKS-1. The FAD-dependent monooxygenase pigN hydroxylates M7PKS-1 at C-4, which triggers the formation of the pyran ring. PigJ, pigK and pigD are involved in the acetylation of the pyran ring. PigJ and pigK form the two subunits of a dedicated fungal FAS that produces the side chain fatty acyl moiety of MonAzPs and pigD transfers the fatty acyl chain to the C-4 alcohol. PigM and pigO are involved in the elimination of the omega-1 alcohol. PigM acts as an O-acetyltransferase that synthesizes the putative O-11 acetyl intermediate whereas pigO eliminates acetic acid to yield an intermediate with a C10(11) double bond. The dehydration of the C-11 alcohol followed by the reduction of the C6(7) double bond by the NAD(P)H-dependent oxidoreductase pigE increases the electrophilicity of the C-5 ketone of the resulting acyl benzopyran. This in turn sets up the C-5 ketone for an intramolecular Knoevenagel aldol condensation with the C-20 enol of the side chain. This condensation affords the characteristic linear tricyclic carbon skeletons of the yellow pigments that serve as the common precursors for the classical yellow pigments monascin and ankaflavin, orange pigments rubopunctatin and monascorubrin, and red pigments ribropunctamine and monascorubramine. The FAD-dependent oxidoreductase pigF is especially invoved in the biosynthesis of orange and red pigments via desaturation of C6(7). The polypeptide is Fatty acid synthase beta subunit pigK (Monascus ruber (Mold)).